Consider the following 848-residue polypeptide: MSLVSTVNDAERTDLLNSSGNRNGPVVETVTTTAVEEKPITTKSVRGFSVYHKGGGAQLSKEALYRAKVKYGIYQSPARSFSTGVAEPKVASDVAANLANDNKTTIEAYKRLFVDPNANTAARRSIVNGGPRVEDVVIPESHYGSHQAATRAYSVASVATDENARRLQSPQSPPATRAHSLKSANKAFYNTKLPEQVEVVPKQVGKKPMDMSKILSSAENRAQHRVTDRWDPVKADHGIRTSTQNLNRVRSTSLTGPIYKERKGVKEPSSKDASATQGDRGNYAQWAAFAVRDMDPTALTNKEFEERERAKRELLSQITSQQVLAKARENADKQLDAIDANDVHRVLFGNDAYNRAAIEIAQRNAQRQAGETDVNEGKINIGGGLWLSPDDVHTIAREMVDPVLGEVHQRADDQRATDVDIKERNDYVTNEWNAWTAMHQTKENNNEALLVNSQNKRTREADSARSEAEKSFTELCDRMDKQVAERNDLLNQTKQAREQLERETEEKLAQNKEDNKTALRDLKGQHAKELEEAREEQRRLVQPYEERLEEVNREHESLVQERTAINEEIARLHESIKEHQYQISKYEREIKSHEEQNASAEEELKKLETDREGIQSHYNDNVVVNANKAKEQALLSSEEARLQNLKVDAIINERKTELNRTEQELQREKLNMLEAMRKTAEARGDENIDEERVKQLIGMTSTEYVEEQKKLQKAAGKAEKPKASTADKGQALDKALAHDQGDQEANTKDFKEGAETKAKESKGKPSQSVAKAIATSPTKTEAKAEPSTSKGKSNGVGTHPDNASGISQISDTLENGKHLSEEDLKELAEDAEQRVSGEPQPSYFKEVF.

Disordered regions lie at residues 1–26 (MSLVSTVNDAERTDLLNSSGNRNGPV), 218–279 (AENR…TQGD), 496–520 (AREQLERETEEKLAQNKEDNKTALR), and 712–848 (QKAA…KEVF). Over residues 221–239 (RAQHRVTDRWDPVKADHGI) the composition is skewed to basic and acidic residues. Residues 240 to 255 (RTSTQNLNRVRSTSLT) show a composition bias toward polar residues. Positions 259 to 270 (YKERKGVKEPSS) are enriched in basic and acidic residues. 2 stretches are compositionally biased toward basic and acidic residues: residues 712 to 722 (QKAAGKAEKPK) and 735 to 763 (ALAHDQGDQEANTKDFKEGAETKAKESKG). 3 stretches are compositionally biased toward polar residues: residues 764 to 779 (KPSQSVAKAIATSPTK), 786 to 796 (PSTSKGKSNGV), and 804 to 813 (SGISQISDTL). Over residues 814-835 (ENGKHLSEEDLKELAEDAEQRV) the composition is skewed to basic and acidic residues.

This sequence belongs to the EIS1 family.

The protein localises to the cytoplasmic granule. It is found in the cell membrane. Its function is as follows. Required for normal formation of eisosomes, large cytoplasmic protein assemblies that localize to specialized domains on plasma membrane and mark the site of endocytosis. The chain is Eisosome protein 1 (EIS1) from Zygosaccharomyces rouxii (strain ATCC 2623 / CBS 732 / NBRC 1130 / NCYC 568 / NRRL Y-229).